The chain runs to 121 residues: MARIAGVDIPRDKRVVISLTYIFGIGKTTAQKVLADAGISEDTRVRDLTEDELNKIREQLDSYKLEGDLRRETSLNIKRLMEIGSFRGIRHRRGLPVRGQNTKNNARTRKGPRKTVANKKK.

Residues histidine 91–lysine 121 are disordered. Positions alanine 106–lysine 121 are enriched in basic residues.

The protein belongs to the universal ribosomal protein uS13 family. As to quaternary structure, part of the 30S ribosomal subunit. Forms a loose heterodimer with protein S19. Forms two bridges to the 50S subunit in the 70S ribosome.

Located at the top of the head of the 30S subunit, it contacts several helices of the 16S rRNA. In the 70S ribosome it contacts the 23S rRNA (bridge B1a) and protein L5 of the 50S subunit (bridge B1b), connecting the 2 subunits; these bridges are implicated in subunit movement. Contacts the tRNAs in the A and P-sites. The sequence is that of Small ribosomal subunit protein uS13 from Lysinibacillus sphaericus (strain C3-41).